Here is a 330-residue protein sequence, read N- to C-terminus: Methionyl-tRNA formyltransferase (330 aa).

Residue 117–120 participates in (6S)-5,6,7,8-tetrahydrofolate binding; sequence SLLP.

Belongs to the Fmt family.

The catalysed reaction is L-methionyl-tRNA(fMet) + (6R)-10-formyltetrahydrofolate = N-formyl-L-methionyl-tRNA(fMet) + (6S)-5,6,7,8-tetrahydrofolate + H(+). In terms of biological role, attaches a formyl group to the free amino group of methionyl-tRNA(fMet). The formyl group appears to play a dual role in the initiator identity of N-formylmethionyl-tRNA by promoting its recognition by IF2 and preventing the misappropriation of this tRNA by the elongation apparatus. The polypeptide is Methionyl-tRNA formyltransferase (Verminephrobacter eiseniae (strain EF01-2)).